Consider the following 602-residue polypeptide: Cholinesterase (602 aa).

The first 28 residues, 1-28 (MHSKVTIICIRFLFWFLLLCMLIGKSHT), serve as a signal peptide directing secretion. N-linked (GlcNAc...) (complex) asparagine glycosylation is found at asparagine 45 and asparagine 85. A disulfide bridge links cysteine 93 with cysteine 120. Tryptophan 110 provides a ligand contact to tacrine. Asparagine 134 carries N-linked (GlcNAc...) (complex) asparagine glycosylation. 144–145 (GG) contacts substrate. Serine 226 functions as the Acyl-ester intermediate in the catalytic mechanism. The residue at position 226 (serine 226) is a Phosphoserine. N-linked (GlcNAc...) (complex) asparagine glycosylation is found at asparagine 269 and asparagine 284. A disulfide bridge connects residues cysteine 280 and cysteine 291. Catalysis depends on glutamate 353, which acts as the Charge relay system. N-linked (GlcNAc...) (complex) asparagine glycosylation is present at asparagine 369. A disulfide bridge connects residues cysteine 428 and cysteine 547. Histidine 466 is a binding site for tacrine. Histidine 466 acts as the Charge relay system in catalysis. Asparagine 483 carries N-linked (GlcNAc...) (complex) asparagine glycosylation. 3 N-linked (GlcNAc...) asparagine glycosylation sites follow: asparagine 509, asparagine 513, and asparagine 514.

The protein belongs to the type-B carboxylesterase/lipase family. In terms of assembly, homotetramer; disulfide-linked. Dimer of dimers. Post-translationally, N-glycosylated. No other PTM detected. The major N-glycan structures are of the complex diantennary type with 1 and 2 N-acetylneuraminic acid molecules (Neu5Ac) making up approximately 33% and 47% of the total N-glycans, respectively. Only low amounts of fucosylated diantennary N-glycans are detected (approximately 2%). Triantennary N-glycans with or without fucose amount to approximately 13%, whereas 5% of the total N-glycans are of the oligomannosidic or hybrid type. As to expression, detected in blood plasma (at protein level). Present in most cells except erythrocytes.

It is found in the secreted. It catalyses the reaction an acylcholine + H2O = a carboxylate + choline + H(+). Its activity is regulated as follows. Inhibited by mercury. Inhibited by Tabun. Tabun forms a covalent adduct with Ser-226 that becomes irreversible upon aging. In terms of biological role, esterase with broad substrate specificity. Contributes to the inactivation of the neurotransmitter acetylcholine. Can degrade neurotoxic organophosphate esters. The polypeptide is Cholinesterase (BCHE) (Homo sapiens (Human)).